The sequence spans 537 residues: Tyrosine-protein kinase Fyn (537 aa).

G2 is lipidated: N-myristoyl glycine. 2 S-palmitoyl cysteine lipidation sites follow: C3 and C6. Position 12 is a phosphothreonine; by PKC (T12). The disordered stretch occupies residues 14-35; sequence LTEERDGSLNQSSGYRYGTDPT. Phosphoserine occurs at positions 21 and 26. The SH3 domain occupies 82 to 143; that stretch reads TGVTLFVALY…PSNYVAPVDS (62 aa). The region spanning 149–246 is the SH2 domain; the sequence is WYFGKLGRKD…GLCCRLVVPC (98 aa). The residue at position 185 (Y185) is a Phosphotyrosine. A Protein kinase domain is found at 271 to 524; that stretch reads LQLIKRLGNG…YLQGFLEDYF (254 aa). ATP is bound by residues 277 to 285 and K299; that span reads LGNGQFGEV. The active-site Proton acceptor is the D390. Y420 is subject to Phosphotyrosine; by autocatalysis. At Y531 the chain carries Phosphotyrosine; by CSK.

It belongs to the protein kinase superfamily. Tyr protein kinase family. SRC subfamily. Interacts (via its SH3 domain) with PIK3R1 and PRMT8. Interacts with FYB1, PAG1, and SH2D1A. Interacts with CD79A (tyrosine-phosphorylated form); the interaction increases FYN activity. Interacts (via SH2 domain) with CSF1R (tyrosine phosphorylated). Interacts with TOM1L1 (phosphorylated form). Interacts with KDR (tyrosine phosphorylated). Interacts (via SH3 domain) with KLHL2 (via N-terminus). Interacts with SH2D1A and SLAMF1. Interacts with ITCH; the interaction phosphorylates ITCH and negatively regulates its activity. Interacts with FASLG. Interacts with RUNX3. Interacts with KIT. Interacts with EPHA8; possible downstream effector of EPHA8 in regulation of cell adhesion. Interacts with PTK2/FAK1; this interaction leads to PTK2/FAK1 phosphorylation and activation. Interacts with CAV1; this interaction couples integrins to the Ras-ERK pathway. Interacts with UNC119. Interacts (via SH2 domain) with PTPRH (phosphorylated form). Interacts with PTPRO (phosphorylated form). Interacts with PTPRB (phosphorylated form). Interacts with FYB2. Interacts with DSCAM. Interacts with SKAP1 and FYB1; this interaction promotes the phosphorylation of CLNK. Interacts with NEDD9; in the presence of PTK2. It depends on Mn(2+) as a cofactor. Autophosphorylated at Tyr-420. Phosphorylation on the C-terminal tail at Tyr-531 by CSK maintains the enzyme in an inactive state. PTPRC/CD45 dephosphorylates Tyr-531 leading to activation. Ultraviolet B (UVB) strongly increase phosphorylation at Thr-12 and kinase activity, and promotes translocation from the cytoplasm to the nucleus. Dephosphorylation at Tyr-420 by PTPN2 negatively regulates T-cell receptor signaling. Phosphorylated at tyrosine residues, which can be enhanced by NTN1. In terms of processing, palmitoylated. Palmitoylation at Cys-3 and Cys-6, probably by ZDHHC21, regulates subcellular location.

It localises to the cytoplasm. It is found in the nucleus. The protein localises to the cell membrane. Its subcellular location is the perikaryon. It catalyses the reaction L-tyrosyl-[protein] + ATP = O-phospho-L-tyrosyl-[protein] + ADP + H(+). Its activity is regulated as follows. Inhibited by phosphorylation of Tyr-531 by leukocyte common antigen and activated by dephosphorylation of this site. Its function is as follows. Non-receptor tyrosine-protein kinase that plays a role in many biological processes including regulation of cell growth and survival, cell adhesion, integrin-mediated signaling, cytoskeletal remodeling, cell motility, immune response and axon guidance. Inactive FYN is phosphorylated on its C-terminal tail within the catalytic domain. Following activation by PKA, the protein subsequently associates with PTK2/FAK1, allowing PTK2/FAK1 phosphorylation, activation and targeting to focal adhesions. Involved in the regulation of cell adhesion and motility through phosphorylation of CTNNB1 (beta-catenin) and CTNND1 (delta-catenin). Regulates cytoskeletal remodeling by phosphorylating several proteins including the actin regulator WAS and the microtubule-associated proteins MAP2 and MAPT. Promotes cell survival by phosphorylating AGAP2/PIKE-A and preventing its apoptotic cleavage. Participates in signal transduction pathways that regulate the integrity of the glomerular slit diaphragm (an essential part of the glomerular filter of the kidney) by phosphorylating several slit diaphragm components including NPHS1, KIRREL1 and TRPC6. Plays a role in neural processes by phosphorylating DPYSL2, a multifunctional adapter protein within the central nervous system, ARHGAP32, a regulator for Rho family GTPases implicated in various neural functions, and SNCA, a small pre-synaptic protein. Involved in reelin signaling by mediating phosphorylation of DAB1 following reelin (RELN)-binding to its receptor. Participates in the downstream signaling pathways that lead to T-cell differentiation and proliferation following T-cell receptor (TCR) stimulation. Phosphorylates PTK2B/PYK2 in response to T-cell receptor activation. Also participates in negative feedback regulation of TCR signaling through phosphorylation of PAG1, thereby promoting interaction between PAG1 and CSK and recruitment of CSK to lipid rafts. CSK maintains LCK and FYN in an inactive form. Promotes CD28-induced phosphorylation of VAV1. In mast cells, phosphorylates CLNK after activation of immunoglobulin epsilon receptor signaling. Can also promote CD244-mediated NK cell activation. In Bos taurus (Bovine), this protein is Tyrosine-protein kinase Fyn.